Consider the following 452-residue polypeptide: MAAAGLCFILAIVSSTSLLASVPVSALVEDLDDSFKENRKDDIWLVDFYAPWCGHCKKLEPVWNEVGIEIRTSGSPIRVGKIDATVYSSIASEFGVRGFPTIKALKGDMAYNYRGPRTKEDIVEFANRVAGPLIRPLPSQQMFDHVKKRHPVLFVYVGVESTLKEKFIEVASELIVYTYFFSASEDVLPKYVTLNEVPAVLVFKDSTYFVYDEYEDGDLSSWVNKERFEGYLHIDGFTLYELGDTGKLVAVAVIDEKNNSIEHTRIKSIAQDVAKNNRNNFHRDFQFGHMDGNDYINSLLMDELSIPTFVVLNTSNQQYFLPSKHIENPEEMIQFINSILDGTAEAQGGDGILQRIKRVFYDAKSTVVSVFKSSPLLGCFLFGLPLGVISIMCYGICTADTEDGSEEMTRKDVIDQNASDEGSDEEEEKGREITDVSDEDQQEKDFMEKKID.

The signal sequence occupies residues 1-26; sequence MAAAGLCFILAIVSSTSLLASVPVSA. The Thioredoxin domain maps to 27 to 128; sequence LVEDLDDSFK…KEDIVEFANR (102 aa). At 27 to 375 the chain is on the lumenal side; sequence LVEDLDDSFK…TVVSVFKSSP (349 aa). Active-site nucleophile residues include cysteine 53 and cysteine 56. Cysteines 53 and 56 form a disulfide. Asparagine 258 and asparagine 313 each carry an N-linked (GlcNAc...) asparagine glycan. The chain crosses the membrane as a helical span at residues 376-396; the sequence is LLGCFLFGLPLGVISIMCYGI. Topologically, residues 397–452 are cytoplasmic; sequence CTADTEDGSEEMTRKDVIDQNASDEGSDEEEEKGREITDVSDEDQQEKDFMEKKID. The segment at 405–452 is disordered; it reads SEEMTRKDVIDQNASDEGSDEEEEKGREITDVSDEDQQEKDFMEKKID. Positions 443 to 452 are enriched in basic and acidic residues; it reads EKDFMEKKID. Positions 449 to 452 match the Di-lysine motif motif; the sequence is KKID.

It belongs to the protein disulfide isomerase family.

It localises to the endoplasmic reticulum membrane. The enzyme catalyses Catalyzes the rearrangement of -S-S- bonds in proteins.. Its function is as follows. Probable disulfide isomerase, which participates in the folding of proteins containing disulfide bonds. May act as a dithiol oxidase. Acts as a regulator of endoplasmic reticulum-mitochondria contact sites via its ability to regulate redox signals. This is Protein disulfide-isomerase TMX3 (tmx3) from Xenopus laevis (African clawed frog).